The following is a 150-amino-acid chain: Deoxyuridine 5'-triphosphate nucleotidohydrolase (150 aa).

Substrate is bound by residues 70-72 (RSG), asparagine 82, 86-88 (LID), and methionine 96.

This sequence belongs to the dUTPase family. Mg(2+) is required as a cofactor.

The enzyme catalyses dUTP + H2O = dUMP + diphosphate + H(+). It functions in the pathway pyrimidine metabolism; dUMP biosynthesis; dUMP from dCTP (dUTP route): step 2/2. Functionally, this enzyme is involved in nucleotide metabolism: it produces dUMP, the immediate precursor of thymidine nucleotides and it decreases the intracellular concentration of dUTP so that uracil cannot be incorporated into DNA. The polypeptide is Deoxyuridine 5'-triphosphate nucleotidohydrolase (Baumannia cicadellinicola subsp. Homalodisca coagulata).